We begin with the raw amino-acid sequence, 155 residues long: Small ribosomal subunit protein uS9 (155 aa).

The protein belongs to the universal ribosomal protein uS9 family.

The sequence is that of Small ribosomal subunit protein uS9 from Sinorhizobium fredii (strain NBRC 101917 / NGR234).